A 337-amino-acid polypeptide reads, in one-letter code: GTP 3',8-cyclase (337 aa).

Positions 17–243 (PFQRQYYYLR…HKSHTDGPAK (227 aa)) constitute a Radical SAM core domain. Arginine 26 contributes to the GTP binding site. Positions 33 and 37 each coordinate [4Fe-4S] cluster. Position 39 (tyrosine 39) interacts with S-adenosyl-L-methionine. Cysteine 40 lines the [4Fe-4S] cluster pocket. Residue arginine 76 participates in GTP binding. Glycine 80 contacts S-adenosyl-L-methionine. Residue threonine 107 participates in GTP binding. Residue serine 131 coordinates S-adenosyl-L-methionine. Position 168 (lysine 168) interacts with GTP. Methionine 202 contributes to the S-adenosyl-L-methionine binding site. 2 residues coordinate [4Fe-4S] cluster: cysteine 265 and cysteine 268. Position 270-272 (270-272 (RLR)) interacts with GTP. Residue cysteine 282 coordinates [4Fe-4S] cluster.

This sequence belongs to the radical SAM superfamily. MoaA family. As to quaternary structure, monomer and homodimer. It depends on [4Fe-4S] cluster as a cofactor.

It carries out the reaction GTP + AH2 + S-adenosyl-L-methionine = (8S)-3',8-cyclo-7,8-dihydroguanosine 5'-triphosphate + 5'-deoxyadenosine + L-methionine + A + H(+). It participates in cofactor biosynthesis; molybdopterin biosynthesis. Catalyzes the cyclization of GTP to (8S)-3',8-cyclo-7,8-dihydroguanosine 5'-triphosphate. This is GTP 3',8-cyclase from Haemophilus influenzae (strain PittGG).